A 519-amino-acid chain; its full sequence is Ribonuclease Y (519 aa).

Residues 3–23 traverse the membrane as a helical segment; that stretch reads LIEIVLLLVGMAVGAATGFIL. The region spanning 209 to 272 is the KH domain; sequence TVTAVSLPSE…QIAKMALERL (64 aa). Residues 335 to 428 enclose the HD domain; sequence VLQHSMEVAS…VQAADSLSGA (94 aa).

This sequence belongs to the RNase Y family.

The protein resides in the cell membrane. Functionally, endoribonuclease that initiates mRNA decay. The chain is Ribonuclease Y from Oleidesulfovibrio alaskensis (strain ATCC BAA-1058 / DSM 17464 / G20) (Desulfovibrio alaskensis).